A 44-amino-acid chain; its full sequence is Photosystem I reaction center subunit IX (44 aa).

Residues 7–27 (YLSVAPVLSTLWFGSLAGLLI) traverse the membrane as a helical segment.

Belongs to the PsaJ family.

Its subcellular location is the plastid. The protein localises to the chloroplast thylakoid membrane. Functionally, may help in the organization of the PsaE and PsaF subunits. The sequence is that of Photosystem I reaction center subunit IX from Arabis hirsuta (Hairy rock-cress).